Here is a 402-residue protein sequence, read N- to C-terminus: Queuine tRNA-ribosyltransferase-like protein (402 aa).

It belongs to the queuine tRNA-ribosyltransferase family.

This is Queuine tRNA-ribosyltransferase-like protein from Theileria annulata.